Reading from the N-terminus, the 871-residue chain is DNA mismatch repair protein MutS 1 (871 aa).

614-621 (GPNMSGKS) contributes to the ATP binding site.

Belongs to the DNA mismatch repair MutS family.

Functionally, this protein is involved in the repair of mismatches in DNA. It is possible that it carries out the mismatch recognition step. This protein has a weak ATPase activity. This chain is DNA mismatch repair protein MutS 1, found in Halobacterium salinarum (strain ATCC 29341 / DSM 671 / R1).